Consider the following 294-residue polypeptide: BOI-related E3 ubiquitin-protein ligase 1 (294 aa).

The interval 168–204 (LQERVKNLYVENQIWRDLAQTNEATANNLRSNLEQVL) is WRD domain. The stretch at 183-212 (RDLAQTNEATANNLRSNLEQVLAQVDDLDA) forms a coiled coil. An RING-type zinc finger spans residues 244–281 (CKRCGELTASVLVLPCRHLCLCTVCGSSALLRTCPVCD).

Interacts with the DELLA proteins GAI, RGA, RGL1, RGL2 and RGL3.

The enzyme catalyses S-ubiquitinyl-[E2 ubiquitin-conjugating enzyme]-L-cysteine + [acceptor protein]-L-lysine = [E2 ubiquitin-conjugating enzyme]-L-cysteine + N(6)-ubiquitinyl-[acceptor protein]-L-lysine.. Its pathway is protein degradation; proteasomal ubiquitin-dependent pathway. In terms of biological role, E3 ubiquitin-protein ligase involved in regulation of abiotic stress responses. Not involved in ubiquitination of MYB108/BOS1. Has no effect on the stability of the DELLA proteins. The sequence is that of BOI-related E3 ubiquitin-protein ligase 1 (BRG1) from Arabidopsis thaliana (Mouse-ear cress).